Consider the following 427-residue polypeptide: Succinate--CoA ligase [ADP-forming] subunit beta, mitochondrial (427 aa).

The N-terminal 30 residues, 1-30 (MYSRKSLSLISKCGQLSRLNAQAALQARRH), are a transit peptide targeting the mitochondrion. One can recognise an ATP-grasp domain in the interval 39–284 (AQLLREYGIG…LSQEDPDEVK (246 aa)). Residues lysine 76 and 83-85 (GRG) contribute to the ATP site. Serine 102 bears the Phosphoserine mark. ATP is bound at residue glutamate 144. Mg(2+) contacts are provided by asparagine 236 and aspartate 253. Phosphoserine occurs at positions 263 and 276. Substrate is bound by residues asparagine 304 and 361 to 363 (GIV).

Belongs to the succinate/malate CoA ligase beta subunit family. As to quaternary structure, heterodimer of an alpha and a beta subunit. It depends on Mg(2+) as a cofactor.

The protein localises to the mitochondrion. It carries out the reaction succinate + ATP + CoA = succinyl-CoA + ADP + phosphate. The protein operates within carbohydrate metabolism; tricarboxylic acid cycle; succinate from succinyl-CoA (ligase route): step 1/1. In terms of biological role, succinyl-CoA synthetase functions in the citric acid cycle (TCA), coupling the hydrolysis of succinyl-CoA to the synthesis of ATP and thus represents the only step of substrate-level phosphorylation in the TCA. The beta subunit provides nucleotide specificity of the enzyme and binds the substrate succinate, while the binding sites for coenzyme A and phosphate are found in the alpha subunit. The sequence is that of Succinate--CoA ligase [ADP-forming] subunit beta, mitochondrial from Saccharomyces cerevisiae (strain ATCC 204508 / S288c) (Baker's yeast).